Here is an 826-residue protein sequence, read N- to C-terminus: Disintegrin and metalloproteinase domain-containing protein 8 (826 aa).

Positions 1-16 (MLGLWLLSVLWTPAVA) are cleaved as a signal peptide. The Extracellular portion of the chain corresponds to 17-658 (PGPPLPHVKQ…VSDEQAASTS (642 aa)). Residues Asn-89 and Asn-260 are each glycosylated (N-linked (GlcNAc...) asparagine). The region spanning 196–395 (RYVELYVVAD…PQTGCLTNVP (200 aa)) is the Peptidase M12B domain. Disulfide bonds link Cys-305–Cys-390, Cys-346–Cys-374, Cys-348–Cys-357, Cys-430–Cys-452, Cys-443–Cys-449, Cys-461–Cys-481, Cys-468–Cys-498, Cys-493–Cys-503, Cys-563–Cys-615, Cys-615–Cys-625, Cys-619–Cys-631, and Cys-633–Cys-642. Residue His-329 participates in Zn(2+) binding. Glu-330 is an active-site residue. 2 residues coordinate Zn(2+): His-333 and His-339. The 87-residue stretch at 403-489 (GPVCGNLFVE…TCPEDAFQQN (87 aa)) folds into the Disintegrin domain. Asn-431 is a glycosylation site (N-linked (GlcNAc...) asparagine). The EGF-like domain maps to 611-643 (RSENCSAKCNNHGVCNHKRECHCHKGWAPPNCV). The N-linked (GlcNAc...) asparagine glycan is linked to Asn-614. The chain crosses the membrane as a helical span at residues 659–683 (LPVSVVVVLVILVAAMVIVAGIVIY). The Cytoplasmic portion of the chain corresponds to 684 to 826 (RKAPRQIQRR…VALKVPIQKR (143 aa)). The tract at residues 701–826 (SGLSNPLFYT…VALKVPIQKR (126 aa)) is disordered. Pro residues predominate over residues 733–748 (PPRPIVKPKRPPPAPP). Low complexity predominate over residues 749 to 763 (GAVSSSPLPVPVYAP).

As to quaternary structure, interacts with FST3. Requires Zn(2+) as cofactor. Macrophages.

It localises to the membrane. Possible involvement in extravasation of leukocytes. In Mus musculus (Mouse), this protein is Disintegrin and metalloproteinase domain-containing protein 8 (Adam8).